Consider the following 942-residue polypeptide: DNA polymerase I (942 aa).

One can recognise a 5'-3' exonuclease domain in the interval 177 to 269 (EPDQLADLRG…LEAARIGVYD (93 aa)). The 3'-5' exonuclease domain occupies 340-522 (TIVRDATALA…LTERLQRQLE (183 aa)).

The protein belongs to the DNA polymerase type-A family. As to quaternary structure, single-chain monomer with multiple functions.

It catalyses the reaction DNA(n) + a 2'-deoxyribonucleoside 5'-triphosphate = DNA(n+1) + diphosphate. Functionally, in addition to polymerase activity, this DNA polymerase exhibits 3'-5' and 5'-3' exonuclease activity. In Chloroflexus aurantiacus (strain ATCC 29366 / DSM 635 / J-10-fl), this protein is DNA polymerase I (polA).